The chain runs to 206 residues: Ribosomal RNA small subunit methyltransferase G (206 aa).

Residues Gly74, Leu79, 125–126 (VE), and Arg140 contribute to the S-adenosyl-L-methionine site.

The protein belongs to the methyltransferase superfamily. RNA methyltransferase RsmG family.

It is found in the cytoplasm. It catalyses the reaction guanosine(527) in 16S rRNA + S-adenosyl-L-methionine = N(7)-methylguanosine(527) in 16S rRNA + S-adenosyl-L-homocysteine. In terms of biological role, specifically methylates the N7 position of guanine in position 527 of 16S rRNA. In Shewanella baltica (strain OS223), this protein is Ribosomal RNA small subunit methyltransferase G.